Reading from the N-terminus, the 348-residue chain is Nicotinate-nucleotide--dimethylbenzimidazole phosphoribosyltransferase (348 aa).

E316 functions as the Proton acceptor in the catalytic mechanism.

It belongs to the CobT family.

It catalyses the reaction 5,6-dimethylbenzimidazole + nicotinate beta-D-ribonucleotide = alpha-ribazole 5'-phosphate + nicotinate + H(+). It participates in nucleoside biosynthesis; alpha-ribazole biosynthesis; alpha-ribazole from 5,6-dimethylbenzimidazole: step 1/2. Its function is as follows. Catalyzes the synthesis of alpha-ribazole-5'-phosphate from nicotinate mononucleotide (NAMN) and 5,6-dimethylbenzimidazole (DMB). This is Nicotinate-nucleotide--dimethylbenzimidazole phosphoribosyltransferase from Xanthomonas axonopodis pv. citri (strain 306).